The sequence spans 412 residues: Intraflagellar transport protein che-13 (412 aa).

Disordered stretches follow at residues 1 to 21 (MEEEHEEESHLSQSDTVGSAI) and 162 to 193 (PPKEEDEDTAVDEQDEDDDNDDIVEEPMNFLD). The segment covering 165–193 (EEDEDTAVDEQDEDDDNDDIVEEPMNFLD) has biased composition (acidic residues). Positions 302-393 (QLASMMSKFR…VQIGVFEQSI (92 aa)) form a coiled coil.

It belongs to the IFT57 family. As to quaternary structure, component of the IFT complex B composed of at least che-2, che-13, dyf-1, dyf-3, dyf-6, dyf-11, dyf-13, ift-20, ift-74, ift-81, ifta-2, osm-1, osm-5 and osm-6.

It is found in the cytoplasm. It localises to the cytoskeleton. The protein localises to the cilium axoneme. Its function is as follows. Component of the intraflagellar transport (IFT) complex B required for transport of proteins in the motile cilium. May be required for ciliary entrance and transport of specific ciliary cargo proteins such as che-3 which are related to motility. Required for the formation of chemosensory cilia that detect chemosensory cues. This chain is Intraflagellar transport protein che-13, found in Caenorhabditis elegans.